The following is a 263-amino-acid chain: Small ribosomal subunit protein eS4 (263 aa).

The 63-residue stretch at 42–104 folds into the S4 RNA-binding domain; sequence LPLIIFLRNR…TGENFRLIYD (63 aa).

Belongs to the eukaryotic ribosomal protein eS4 family.

The chain is Small ribosomal subunit protein eS4 (RPS4) from Bos taurus (Bovine).